Here is a 250-residue protein sequence, read N- to C-terminus: UDP-2,3-diacylglucosamine hydrolase (250 aa).

The Mn(2+) site is built by D8, H10, D41, N79, and H114. Substrate is bound at residue 79-80 (NR). Substrate is bound by residues D122, S160, D172, Q175, and H203. Positions 203 and 205 each coordinate Mn(2+).

It belongs to the LpxH family. Requires Mn(2+) as cofactor.

The protein localises to the cell inner membrane. The catalysed reaction is UDP-2-N,3-O-bis[(3R)-3-hydroxytetradecanoyl]-alpha-D-glucosamine + H2O = 2-N,3-O-bis[(3R)-3-hydroxytetradecanoyl]-alpha-D-glucosaminyl 1-phosphate + UMP + 2 H(+). It participates in glycolipid biosynthesis; lipid IV(A) biosynthesis; lipid IV(A) from (3R)-3-hydroxytetradecanoyl-[acyl-carrier-protein] and UDP-N-acetyl-alpha-D-glucosamine: step 4/6. Functionally, hydrolyzes the pyrophosphate bond of UDP-2,3-diacylglucosamine to yield 2,3-diacylglucosamine 1-phosphate (lipid X) and UMP by catalyzing the attack of water at the alpha-P atom. Involved in the biosynthesis of lipid A, a phosphorylated glycolipid that anchors the lipopolysaccharide to the outer membrane of the cell. The sequence is that of UDP-2,3-diacylglucosamine hydrolase from Xylella fastidiosa (strain M12).